The following is a 92-amino-acid chain: DNA-directed RNA polymerase subunit omega (92 aa).

The protein belongs to the RNA polymerase subunit omega family. The RNAP catalytic core consists of 2 alpha, 1 beta, 1 beta' and 1 omega subunit. When a sigma factor is associated with the core the holoenzyme is formed, which can initiate transcription.

It carries out the reaction RNA(n) + a ribonucleoside 5'-triphosphate = RNA(n+1) + diphosphate. Functionally, promotes RNA polymerase assembly. Latches the N- and C-terminal regions of the beta' subunit thereby facilitating its interaction with the beta and alpha subunits. The sequence is that of DNA-directed RNA polymerase subunit omega from Acinetobacter baumannii (strain AB307-0294).